Reading from the N-terminus, the 248-residue chain is DnaA regulatory inactivator Hda (248 aa).

Belongs to the DnaA family. HdA subfamily. In terms of assembly, the active form seems to be an ADP-bound monomer. Forms the RIDA complex (regulatory inactivation of DnaA) of ATP-DnaA, ADP-Hda and the DNA-loaded beta sliding clamp (dnaN).

Mediates the interaction of DNA replication initiator protein DnaA with DNA polymerase subunit beta sliding clamp (dnaN). Stimulates hydrolysis of ATP-DnaA to ADP-DnaA, rendering DnaA inactive for reinitiation, a process called regulatory inhibition of DnaA or RIDA. This chain is DnaA regulatory inactivator Hda, found in Proteus mirabilis (strain HI4320).